Reading from the N-terminus, the 189-residue chain is Cyclin-dependent kinase inhibitor 5 (189 aa).

Polar residues predominate over residues Lys73–Ala93. Positions Lys73 to Thr107 are disordered.

It belongs to the CDI family. ICK/KRP subfamily. Interacts with CYCD4-1. Does not interact with CDKA-1. In terms of tissue distribution, expressed in flowers and at lower levels in roots and leaves.

Its subcellular location is the nucleus. The protein localises to the nucleoplasm. Its function is as follows. Inhibits CYCD2-1/CDKA-1 complex kinase activity without interaction with the complex. The protein is Cyclin-dependent kinase inhibitor 5 (KRP5) of Arabidopsis thaliana (Mouse-ear cress).